A 462-amino-acid chain; its full sequence is General transcription factor IIH subunit 4 (462 aa).

It belongs to the TFB2 family. As to quaternary structure, component of the 7-subunit TFIIH core complex composed of XPB/ERCC3, XPD/ERCC2, GTF2H1, GTF2H2, GTF2H3, GTF2H4 and GTF2H5, which is active in NER. The core complex associates with the 3-subunit CDK-activating kinase (CAK) module composed of CCNH/cyclin H, CDK7 and MNAT1 to form the 10-subunit holoenzyme (holo-TFIIH) active in transcription. Part of TBP-based Pol II pre-initiation complex (PIC), in which Pol II core assembles with general transcription factors and other specific initiation factors including GTF2E1, GTF2E2, GTF2F1, GTF2F2, TCEA1, ERCC2, ERCC3, GTF2H2, GTF2H3, GTF2H4, GTF2H5, GTF2A1, GTF2A2, GTF2B and TBP; this large multi-subunit PIC complex mediates DNA unwinding and targets Pol II core to the transcription start site where the first phosphodiester bond forms.

It localises to the nucleus. In terms of biological role, component of the general transcription and DNA repair factor IIH (TFIIH) core complex, which is involved in general and transcription-coupled nucleotide excision repair (NER) of damaged DNA and, when complexed to CAK, in RNA transcription by RNA polymerase II. In NER, TFIIH acts by opening DNA around the lesion to allow the excision of the damaged oligonucleotide and its replacement by a new DNA fragment. In transcription, TFIIH has an essential role in transcription initiation. When the pre-initiation complex (PIC) has been established, TFIIH is required for promoter opening and promoter escape. Phosphorylation of the C-terminal tail (CTD) of the largest subunit of RNA polymerase II by the kinase module CAK controls the initiation of transcription. Its function is as follows. Stimulates the ATPase activity of TFIIH subunit XPB/ERCC3. The protein is General transcription factor IIH subunit 4 (GTF2H4) of Homo sapiens (Human).